Here is a 300-residue protein sequence, read N- to C-terminus: tRNA dimethylallyltransferase (300 aa).

ATP is bound at residue 11 to 18; it reads GPTAVGKS. 13–18 serves as a coordination point for substrate; it reads TAVGKS. Positions 35 to 38 are interaction with substrate tRNA; sequence DSIQ.

The protein belongs to the IPP transferase family. Monomer. Requires Mg(2+) as cofactor.

It carries out the reaction adenosine(37) in tRNA + dimethylallyl diphosphate = N(6)-dimethylallyladenosine(37) in tRNA + diphosphate. Its function is as follows. Catalyzes the transfer of a dimethylallyl group onto the adenine at position 37 in tRNAs that read codons beginning with uridine, leading to the formation of N6-(dimethylallyl)adenosine (i(6)A). The polypeptide is tRNA dimethylallyltransferase (Borreliella afzelii (strain PKo) (Borrelia afzelii)).